Here is a 448-residue protein sequence, read N- to C-terminus: Beta-glucosidase A (448 aa).

Catalysis depends on glutamate 166, which acts as the Proton donor. Glutamate 352 (nucleophile) is an active-site residue.

It belongs to the glycosyl hydrolase 1 family. As to quaternary structure, homooctamer.

The catalysed reaction is Hydrolysis of terminal, non-reducing beta-D-glucosyl residues with release of beta-D-glucose.. BglA is intracellular and cleaves cellobiose probably through inorganic phosphate mediated hydrolysis. This is Beta-glucosidase A (bglA) from Paenibacillus polymyxa (Bacillus polymyxa).